Here is a 249-residue protein sequence, read N- to C-terminus: Glucosamine-6-phosphate deaminase (249 aa).

Asp-67 acts as the Proton acceptor; for enolization step in catalysis. Catalysis depends on Asn-136, which acts as the For ring-opening step. His-138 (proton acceptor; for ring-opening step) is an active-site residue. The For ring-opening step role is filled by Glu-143.

The protein belongs to the glucosamine/galactosamine-6-phosphate isomerase family. NagB subfamily.

The enzyme catalyses alpha-D-glucosamine 6-phosphate + H2O = beta-D-fructose 6-phosphate + NH4(+). Its pathway is amino-sugar metabolism; N-acetylneuraminate degradation; D-fructose 6-phosphate from N-acetylneuraminate: step 5/5. Catalyzes the reversible isomerization-deamination of glucosamine 6-phosphate (GlcN6P) to form fructose 6-phosphate (Fru6P) and ammonium ion. In Clostridioides difficile (strain 630) (Peptoclostridium difficile), this protein is Glucosamine-6-phosphate deaminase.